We begin with the raw amino-acid sequence, 179 residues long: Large ribosomal subunit protein uL5 (179 aa).

It belongs to the universal ribosomal protein uL5 family. As to quaternary structure, part of the 50S ribosomal subunit; part of the 5S rRNA/L5/L18/L25 subcomplex. Contacts the 5S rRNA and the P site tRNA. Forms a bridge to the 30S subunit in the 70S ribosome.

Functionally, this is one of the proteins that bind and probably mediate the attachment of the 5S RNA into the large ribosomal subunit, where it forms part of the central protuberance. In the 70S ribosome it contacts protein S13 of the 30S subunit (bridge B1b), connecting the 2 subunits; this bridge is implicated in subunit movement. Contacts the P site tRNA; the 5S rRNA and some of its associated proteins might help stabilize positioning of ribosome-bound tRNAs. The chain is Large ribosomal subunit protein uL5 from Proteus mirabilis (strain HI4320).